We begin with the raw amino-acid sequence, 28 residues long: Potassium channel toxin alpha-KTx 9.3 (28 aa).

3 disulfide bridges follow: C3-C19, C6-C24, and C10-C26.

It belongs to the short scorpion toxin superfamily. Potassium channel inhibitor family. Alpha-KTx 09 subfamily. As to expression, expressed by the venom gland.

It localises to the secreted. In terms of biological role, inhibits voltage-gated potassium channels. The sequence is that of Potassium channel toxin alpha-KTx 9.3 from Aegaeobuthus nigrocinctus (Scorpion).